The primary structure comprises 165 residues: C-phycoerythrin class 2 subunit alpha (165 aa).

Residue Cys75 participates in phycourobilin binding. Residues Cys83 and Cys140 each coordinate (2R,3E)-phycoerythrobilin.

Belongs to the phycobiliprotein family. In terms of assembly, heterodimer of an alpha and a beta chain. Contains two covalently linked phycoerythrobilin chromophores and one covalently linked phycourobilin chromophore.

The protein resides in the cellular thylakoid membrane. Functionally, light-harvesting photosynthetic bile pigment-protein from the phycobiliprotein complex. The sequence is that of C-phycoerythrin class 2 subunit alpha (mpeA) from Synechococcus sp. (strain WH8020).